The following is a 687-amino-acid chain: Triadin (687 aa).

Topologically, residues 1-47 are cytoplasmic; it reads MTEITAEGNASITTTVIDNKNGSVPKSPGKVLKRTVTEDIVTTFSSP. A helical transmembrane segment spans residues 48–68; sequence AAWLLVIALIITWSAVAIVMF. Residues 69–687 are Lumenal-facing; it reads DLVDYKNFSA…NSPGQKQQEQ (619 aa). Residues 117-130 are compositionally biased toward acidic residues; it reads DGDEDDEDADEDID. Disordered stretches follow at residues 117–265, 280–643, and 660–687; these read DGDE…EQKD, GDLK…QKSP, and FQFP…QQEQ. Over residues 131 to 265 the composition is skewed to basic and acidic residues; it reads KGEIEEPPLK…PAVPKHEQKD (135 aa). Polar residues predominate over residues 295-306; sequence LTASRPALSTPS. S303 and S306 each carry phosphoserine. The segment covering 307–356 has biased composition (basic and acidic residues); that stretch reads LEEKEKEEKKKVEKKVTSDTKKKEKGEAKKKSEKETVIDGKGKEPGKPPE. The span at 357–370 shows a compositional bias: low complexity; sequence TKQTTTKLTTQAAA. Basic and acidic residues-rich tracts occupy residues 371 to 390, 396 to 431, 442 to 459, and 466 to 501; these read TKDE…EEKP, EKKE…KEEI, GKKE…DVKP, and LKKE…KEAK. Residue N514 is glycosylated (N-linked (GlcNAc...) asparagine). Basic and acidic residues-rich tracts occupy residues 539–583 and 594–630; these read TAEK…KVPP and TRAE…DKEV. 2 stretches are compositionally biased toward polar residues: residues 631–643 and 667–687; these read TNNV…QKSP and VQHS…QQEQ.

In terms of assembly, homooligomer of variable subunit number; disulfide-linked. Interacts with CASQ1 in skeletal muscle. Interacts with CASQ2. Interacts with RYR1 in skeletal muscle. Phosphorylated by CaMK2. Post-translationally, N-glycosylated. As to expression, detected in skeletal muscle (at protein level). Detected in skeletal muscle.

It is found in the sarcoplasmic reticulum membrane. It localises to the microsome. The protein resides in the cell membrane. Its subcellular location is the sarcolemma. Contributes to the regulation of lumenal Ca2+ release via the sarcoplasmic reticulum calcium release channels RYR1 and RYR2, a key step in triggering skeletal and heart muscle contraction. Required for normal organization of the triad junction, where T-tubules and the sarcoplasmic reticulum terminal cisternae are in close contact. Required for normal skeletal muscle strength. Plays a role in excitation-contraction coupling in the heart and in regulating the rate of heart beats. In Rattus norvegicus (Rat), this protein is Triadin.